Consider the following 129-residue polypeptide: Large ribosomal subunit protein uL14m (129 aa).

It belongs to the universal ribosomal protein uL14 family. As to quaternary structure, component of the mitochondrial ribosome large subunit (39S) which comprises a 16S rRNA and about 50 distinct proteins.

Its subcellular location is the mitochondrion. The chain is Large ribosomal subunit protein uL14m (mrpl14) from Dictyostelium discoideum (Social amoeba).